A 200-amino-acid polypeptide reads, in one-letter code: Probable nicotinate-nucleotide adenylyltransferase (200 aa).

This sequence belongs to the NadD family.

The catalysed reaction is nicotinate beta-D-ribonucleotide + ATP + H(+) = deamido-NAD(+) + diphosphate. It functions in the pathway cofactor biosynthesis; NAD(+) biosynthesis; deamido-NAD(+) from nicotinate D-ribonucleotide: step 1/1. Catalyzes the reversible adenylation of nicotinate mononucleotide (NaMN) to nicotinic acid adenine dinucleotide (NaAD). The protein is Probable nicotinate-nucleotide adenylyltransferase of Clostridium novyi (strain NT).